The primary structure comprises 273 residues: Beta-lactamase OXA-23 (273 aa).

Positions 1–17 (MNKYFTCYVVASLFLSG) are cleaved as a signal peptide. S79 (acyl-ester intermediate) is an active-site residue. A beta-lactam is bound by residues S79, K82, S126, T217, W219, and R259. K82 is modified (N6-carboxylysine).

It belongs to the class-D beta-lactamase family. In terms of assembly, monomer. In terms of processing, carboxylated on the epsilon-amino group of a lysine, with the resulting carbamate functional group serving as a general base. Probably N-carboxylated at Lys-82 at neutral pH in vivo and undergoes complete N-decarboxylation, at pH 4.1, in vitro.

Its subcellular location is the periplasm. It catalyses the reaction a beta-lactam + H2O = a substituted beta-amino acid. Inhibited by the desmethyl carbapenem, MA-1-206, via a covalent binding to Ser-79. In terms of biological role, class D beta-lactamase which confers resistance to the beta-lactam antibiotics, including ampicillin, and carbapenems such as imipenem and meropenem. Acts via hydrolysis of the beta-lactam ring. Has penicillin-, cephalosporin- and carbapenem-hydrolyzing activities, but lacks ceftazidime-hydrolyzing activity. This Acinetobacter baumannii protein is Beta-lactamase OXA-23.